The primary structure comprises 90 residues: Small ribosomal subunit protein uS15c (90 aa).

It belongs to the universal ribosomal protein uS15 family. In terms of assembly, part of the 30S ribosomal subunit.

Its subcellular location is the plastid. The protein localises to the chloroplast. The sequence is that of Small ribosomal subunit protein uS15c (rps15) from Morus indica (Mulberry).